Reading from the N-terminus, the 341-residue chain is Glycerol-1-phosphate dehydrogenase [NAD(P)+] (341 aa).

NAD(+) is bound by residues 81 to 85 and 103 to 106; these read GKAID and TTAS. Substrate is bound at residue Asp108. Ser112 is a binding site for NAD(+). Position 151 (Asp151) interacts with substrate. Asp151 and His232 together coordinate Zn(2+). His236 lines the substrate pocket. Zn(2+) is bound at residue His253.

It belongs to the glycerol-1-phosphate dehydrogenase family. Zn(2+) is required as a cofactor.

The protein resides in the cytoplasm. The enzyme catalyses sn-glycerol 1-phosphate + NAD(+) = dihydroxyacetone phosphate + NADH + H(+). It carries out the reaction sn-glycerol 1-phosphate + NADP(+) = dihydroxyacetone phosphate + NADPH + H(+). Its pathway is membrane lipid metabolism; glycerophospholipid metabolism. Its function is as follows. Catalyzes the NAD(P)H-dependent reduction of dihydroxyacetonephosphate (DHAP or glycerone phosphate) to glycerol 1-phosphate (G1P). The G1P thus generated is used as the glycerophosphate backbone of phospholipids in the cellular membranes of Archaea. This Methanococcus aeolicus (strain ATCC BAA-1280 / DSM 17508 / OCM 812 / Nankai-3) protein is Glycerol-1-phosphate dehydrogenase [NAD(P)+].